Consider the following 424-residue polypeptide: UDP-N-acetylglucosamine 1-carboxyvinyltransferase (424 aa).

Residue 22–23 participates in phosphoenolpyruvate binding; it reads KN. Position 96 (Arg96) interacts with UDP-N-acetyl-alpha-D-glucosamine. The active-site Proton donor is the Cys120. Position 120 is a 2-(S-cysteinyl)pyruvic acid O-phosphothioketal (Cys120). UDP-N-acetyl-alpha-D-glucosamine contacts are provided by residues 125–129, Asp312, and Ile334; that span reads RPVDQ.

This sequence belongs to the EPSP synthase family. MurA subfamily.

It localises to the cytoplasm. It carries out the reaction phosphoenolpyruvate + UDP-N-acetyl-alpha-D-glucosamine = UDP-N-acetyl-3-O-(1-carboxyvinyl)-alpha-D-glucosamine + phosphate. The protein operates within cell wall biogenesis; peptidoglycan biosynthesis. Its function is as follows. Cell wall formation. Adds enolpyruvyl to UDP-N-acetylglucosamine. This Polynucleobacter necessarius subsp. necessarius (strain STIR1) protein is UDP-N-acetylglucosamine 1-carboxyvinyltransferase.